We begin with the raw amino-acid sequence, 335 residues long: Ornithine carbamoyltransferase (335 aa).

Residues 56–59, glutamine 83, arginine 107, and 134–137 contribute to the carbamoyl phosphate site; these read STRT and HPTQ. L-ornithine contacts are provided by residues asparagine 168, aspartate 232, and 236 to 237; that span reads SM. Carbamoyl phosphate-binding positions include 274–275 and arginine 320; that span reads CL.

It belongs to the aspartate/ornithine carbamoyltransferase superfamily. OTCase family.

The protein resides in the cytoplasm. It catalyses the reaction carbamoyl phosphate + L-ornithine = L-citrulline + phosphate + H(+). Its pathway is amino-acid biosynthesis; L-arginine biosynthesis; L-arginine from L-ornithine and carbamoyl phosphate: step 1/3. In terms of biological role, reversibly catalyzes the transfer of the carbamoyl group from carbamoyl phosphate (CP) to the N(epsilon) atom of ornithine (ORN) to produce L-citrulline. This chain is Ornithine carbamoyltransferase, found in Yersinia pseudotuberculosis serotype I (strain IP32953).